The following is a 492-amino-acid chain: Bifunctional purine biosynthesis protein PurH (492 aa).

An MGS-like domain is found at 1-144 (MKKAILSVSN…KNYKHVTTIV (144 aa)).

Belongs to the PurH family.

It carries out the reaction (6R)-10-formyltetrahydrofolate + 5-amino-1-(5-phospho-beta-D-ribosyl)imidazole-4-carboxamide = 5-formamido-1-(5-phospho-D-ribosyl)imidazole-4-carboxamide + (6S)-5,6,7,8-tetrahydrofolate. The enzyme catalyses IMP + H2O = 5-formamido-1-(5-phospho-D-ribosyl)imidazole-4-carboxamide. The protein operates within purine metabolism; IMP biosynthesis via de novo pathway; 5-formamido-1-(5-phospho-D-ribosyl)imidazole-4-carboxamide from 5-amino-1-(5-phospho-D-ribosyl)imidazole-4-carboxamide (10-formyl THF route): step 1/1. It functions in the pathway purine metabolism; IMP biosynthesis via de novo pathway; IMP from 5-formamido-1-(5-phospho-D-ribosyl)imidazole-4-carboxamide: step 1/1. The protein is Bifunctional purine biosynthesis protein PurH of Staphylococcus aureus (strain MSSA476).